A 352-amino-acid chain; its full sequence is Anthranilate phosphoribosyltransferase (352 aa).

5-phospho-alpha-D-ribose 1-diphosphate is bound by residues glycine 91, 94–95 (GD), threonine 99, 101–104 (NIST), 119–127 (KHGNRASSS), and serine 131. Residue glycine 91 participates in anthranilate binding. Position 103 (serine 103) interacts with Mg(2+). Anthranilate is bound at residue asparagine 122. Arginine 177 serves as a coordination point for anthranilate. Mg(2+)-binding residues include aspartate 235 and glutamate 236.

It belongs to the anthranilate phosphoribosyltransferase family. As to quaternary structure, homodimer. The cofactor is Mg(2+).

It carries out the reaction N-(5-phospho-beta-D-ribosyl)anthranilate + diphosphate = 5-phospho-alpha-D-ribose 1-diphosphate + anthranilate. Its pathway is amino-acid biosynthesis; L-tryptophan biosynthesis; L-tryptophan from chorismate: step 2/5. In terms of biological role, catalyzes the transfer of the phosphoribosyl group of 5-phosphorylribose-1-pyrophosphate (PRPP) to anthranilate to yield N-(5'-phosphoribosyl)-anthranilate (PRA). This Arthrobacter sp. (strain FB24) protein is Anthranilate phosphoribosyltransferase.